A 176-amino-acid polypeptide reads, in one-letter code: Lipoprotein signal peptidase (176 aa).

Helical transmembrane passes span Leu10–Leu30, Val48–Phe68, Tyr78–Met98, and Met102–Asp122. Active-site residues include Asp131 and Asp149. The helical transmembrane segment at His141–Ile161 threads the bilayer.

Belongs to the peptidase A8 family.

It is found in the cell inner membrane. It catalyses the reaction Release of signal peptides from bacterial membrane prolipoproteins. Hydrolyzes -Xaa-Yaa-Zaa-|-(S,diacylglyceryl)Cys-, in which Xaa is hydrophobic (preferably Leu), and Yaa (Ala or Ser) and Zaa (Gly or Ala) have small, neutral side chains.. The protein operates within protein modification; lipoprotein biosynthesis (signal peptide cleavage). Its function is as follows. This protein specifically catalyzes the removal of signal peptides from prolipoproteins. The chain is Lipoprotein signal peptidase from Acinetobacter baumannii (strain SDF).